The chain runs to 340 residues: Tetraacyldisaccharide 4'-kinase (340 aa).

47–54 (SVGGTGKT) provides a ligand contact to ATP.

It belongs to the LpxK family.

It carries out the reaction a lipid A disaccharide + ATP = a lipid IVA + ADP + H(+). The protein operates within glycolipid biosynthesis; lipid IV(A) biosynthesis; lipid IV(A) from (3R)-3-hydroxytetradecanoyl-[acyl-carrier-protein] and UDP-N-acetyl-alpha-D-glucosamine: step 6/6. Transfers the gamma-phosphate of ATP to the 4'-position of a tetraacyldisaccharide 1-phosphate intermediate (termed DS-1-P) to form tetraacyldisaccharide 1,4'-bis-phosphate (lipid IVA). This is Tetraacyldisaccharide 4'-kinase from Flavobacterium johnsoniae (strain ATCC 17061 / DSM 2064 / JCM 8514 / BCRC 14874 / CCUG 350202 / NBRC 14942 / NCIMB 11054 / UW101) (Cytophaga johnsonae).